The chain runs to 287 residues: MPELPEVETVRRGLEPVLSGARLARVRANRPDLRFPLPDGFVQRLTGAKILRLDRRAKYLLVPLDRGDTLVMHLGMTGRFEIAAPSGTIRPGDFAREVTPDDKHAHVVFETEDGAVVTYYDPRRFGFMDLIATDKVDRHPWFAAMGPEPLGEGFDAKTLVAAFNGRKQGPKTLLLDQKTVAGLGNIYVCEALHRAHISPFKPAGMIAGKRLGPLTTAIKDVLAEAVEVGGSSLKDFAATDGALGYFQHRFRVYDREGQPCPTPGCKGMIGREVQAGRSTFFCPVCQV.

The Schiff-base intermediate with DNA role is filled by Pro2. The active-site Proton donor is Glu3. Lys58 acts as the Proton donor; for beta-elimination activity in catalysis. DNA-binding residues include His104, Arg123, and Arg166. The segment at 251-287 (RVYDREGQPCPTPGCKGMIGREVQAGRSTFFCPVCQV) adopts an FPG-type zinc-finger fold. Arg277 (proton donor; for delta-elimination activity) is an active-site residue.

This sequence belongs to the FPG family. In terms of assembly, monomer. It depends on Zn(2+) as a cofactor.

It catalyses the reaction Hydrolysis of DNA containing ring-opened 7-methylguanine residues, releasing 2,6-diamino-4-hydroxy-5-(N-methyl)formamidopyrimidine.. It carries out the reaction 2'-deoxyribonucleotide-(2'-deoxyribose 5'-phosphate)-2'-deoxyribonucleotide-DNA = a 3'-end 2'-deoxyribonucleotide-(2,3-dehydro-2,3-deoxyribose 5'-phosphate)-DNA + a 5'-end 5'-phospho-2'-deoxyribonucleoside-DNA + H(+). Involved in base excision repair of DNA damaged by oxidation or by mutagenic agents. Acts as a DNA glycosylase that recognizes and removes damaged bases. Has a preference for oxidized purines, such as 7,8-dihydro-8-oxoguanine (8-oxoG). Has AP (apurinic/apyrimidinic) lyase activity and introduces nicks in the DNA strand. Cleaves the DNA backbone by beta-delta elimination to generate a single-strand break at the site of the removed base with both 3'- and 5'-phosphates. The protein is Formamidopyrimidine-DNA glycosylase of Caulobacter sp. (strain K31).